The following is a 264-amino-acid chain: Ubiquinone biosynthesis protein COQ4 homolog, mitochondrial (264 aa).

A mitochondrion-targeting transit peptide spans 1–26; the sequence is MMQRCWQISLPLARRRLIPSLTSKRT. Positions 169, 170, 173, and 185 each coordinate Zn(2+).

Belongs to the COQ4 family. As to quaternary structure, component of a multi-subunit COQ enzyme complex. Zn(2+) is required as a cofactor.

It localises to the mitochondrion inner membrane. The catalysed reaction is a 4-hydroxy-3-methoxy-5-(all-trans-polyprenyl)benzoate + H(+) = a 2-methoxy-6-(all-trans-polyprenyl)phenol + CO2. The protein operates within cofactor biosynthesis; ubiquinone biosynthesis. Functionally, lyase that catalyzes the C1-decarboxylation of 4-hydroxy-3-methoxy-5-(all-trans-polyprenyl)benzoic acid into 2-methoxy-6-(all-trans-polyprenyl)phenol during ubiquinone biosynthesis. The protein is Ubiquinone biosynthesis protein COQ4 homolog, mitochondrial of Drosophila grimshawi (Hawaiian fruit fly).